The primary structure comprises 139 residues: Protein Turandot B (139 aa).

The first 21 residues, M1–A21, serve as a signal peptide directing secretion.

It belongs to the Turandot family.

Its subcellular location is the secreted. A humoral factor that may play a role in stress tolerance. This is Protein Turandot B from Drosophila yakuba (Fruit fly).